The primary structure comprises 304 residues: uncharacterized protein (304 aa).

Belongs to the mimivirus L137 family.

This is an uncharacterized protein from Acanthamoeba polyphaga mimivirus (APMV).